Consider the following 384-residue polypeptide: uncharacterized protein (384 aa).

Positions 137-303 (EHDAPNRLWQ…VPGSRYQPSA (167 aa)) constitute an Integrase catalytic domain.

This is an uncharacterized protein from Escherichia coli (strain K12).